Reading from the N-terminus, the 219-residue chain is ATP-dependent Clp protease proteolytic subunit (219 aa).

The tract at residues 1–22 (MPVGVPKVPFLNPNPDPEPDSV) is disordered. S116 (nucleophile) is an active-site residue. The active site involves H141.

This sequence belongs to the peptidase S14 family. In terms of assembly, component of the chloroplastic Clp protease core complex.

It localises to the plastid. The protein resides in the chloroplast stroma. It catalyses the reaction Hydrolysis of proteins to small peptides in the presence of ATP and magnesium. alpha-casein is the usual test substrate. In the absence of ATP, only oligopeptides shorter than five residues are hydrolyzed (such as succinyl-Leu-Tyr-|-NHMec, and Leu-Tyr-Leu-|-Tyr-Trp, in which cleavage of the -Tyr-|-Leu- and -Tyr-|-Trp bonds also occurs).. Its function is as follows. Cleaves peptides in various proteins in a process that requires ATP hydrolysis. Has a chymotrypsin-like activity. Plays a major role in the degradation of misfolded proteins. This chain is ATP-dependent Clp protease proteolytic subunit, found in Pelargonium hortorum (Common geranium).